Here is a 438-residue protein sequence, read N- to C-terminus: MYLIADWRRTHYSEEVIPEMDGQEVILMGWVHSIRALGKLAFVILRDREGTIQAVVPKQKVDEETFAIAKKLGKEDIIAIRGKVVANEKAPKGFEVIPIEIRVLNKADAPLPLDPSEKVAAEIDTRLDKRFLDIRRPKIQAIFKIRSEMLRSIRKTFADGGFVEVNTPKLVASATEGGTELFPISYFEKEAFLGQSPQLYKQMMMAGGFDKVFEIAQIFRAEEHNTRRHLNEAISIDTEMSFVNEKDAMAMLEKVVYNCYADIEYNRPQEIELLELNWEIPEKTFDKITYTEAIDIANAKGVEIEWGEDLSRAAERAVGDEMGGLYFITEWPTQTRPFYTLPHKHDNKVCKAFDLMYKELEISSGAQRVHKYDLLVENISNMGMNPDSFETYLEAFKFGMPPHAGWGLGADRFAMVLTAQDNIRECVLFPRDRQRLTP.

Glu176 is an L-aspartate binding site. Positions 198–201 (QLYK) are aspartate. Residue Arg220 coordinates L-aspartate. ATP is bound by residues 220 to 222 (RAE), 228 to 230 (RHL), and Glu361. Mg(2+) is bound by residues Glu361 and Ser364. L-aspartate contacts are provided by Ser364 and Arg368. 409–412 (GADR) is an ATP binding site.

The protein belongs to the class-II aminoacyl-tRNA synthetase family. Type 2 subfamily. In terms of assembly, homodimer. Mg(2+) serves as cofactor.

The protein localises to the cytoplasm. The catalysed reaction is tRNA(Asx) + L-aspartate + ATP = L-aspartyl-tRNA(Asx) + AMP + diphosphate. In terms of biological role, aspartyl-tRNA synthetase with relaxed tRNA specificity since it is able to aspartylate not only its cognate tRNA(Asp) but also tRNA(Asn). Reaction proceeds in two steps: L-aspartate is first activated by ATP to form Asp-AMP and then transferred to the acceptor end of tRNA(Asp/Asn). This Methanococcus maripaludis (strain C5 / ATCC BAA-1333) protein is Aspartate--tRNA(Asp/Asn) ligase.